A 1150-amino-acid polypeptide reads, in one-letter code: PAN2-PAN3 deadenylation complex catalytic subunit PAN2 (1150 aa).

WD repeat units follow at residues 26–67 (AHHS…MEFQ), 114–156 (GHVN…ITKE), 158–194 (PAPN…VINT), and 290–328 (GHTH…VSFV). The linker stretch occupies residues 326 to 471 (SFVDQGLPVE…IRTDIESLKS (146 aa)). The region spanning 472 to 862 (VVPNMYHLFE…TPLVVMFQLK (391 aa)) is the USP domain. One can recognise an Exonuclease domain in the interval 911-1079 (AIDAEFVLAK…HDSIEDANTA (169 aa)). 4 residues coordinate a divalent metal cation: Asp-913, Glu-915, Asp-1022, and Asp-1075. The tract at residues 1118 to 1150 (GQSAQRTETPPMVDDAQPGALLPYQPPELLQGS) is disordered.

It belongs to the peptidase C19 family. PAN2 subfamily. Forms a heterotrimer with an asymmetric homodimer of the regulatory subunit PAN3 to form the poly(A)-nuclease (PAN) deadenylation complex. It depends on a divalent metal cation as a cofactor.

The protein resides in the cytoplasm. The catalysed reaction is Exonucleolytic cleavage of poly(A) to 5'-AMP.. Its activity is regulated as follows. Positively regulated by the regulatory subunit PAN3. In terms of biological role, catalytic subunit of the poly(A)-nuclease (PAN) deadenylation complex, one of two cytoplasmic mRNA deadenylases involved in mRNA turnover. PAN specifically shortens poly(A) tails of RNA and the activity is stimulated by poly(A)-binding protein PAB1. PAN deadenylation is followed by rapid degradation of the shortened mRNA tails by the CCR4-NOT complex. Deadenylated mRNAs are then degraded by two alternative mechanisms, namely exosome-mediated 3'-5' exonucleolytic degradation, or deadenylation-dependent mRNA decaping and subsequent 5'-3' exonucleolytic degradation by XRN1. May also be involved in post-transcriptional maturation of mRNA poly(A) tails. The sequence is that of PAN2-PAN3 deadenylation complex catalytic subunit PAN2 from Pyricularia oryzae (strain 70-15 / ATCC MYA-4617 / FGSC 8958) (Rice blast fungus).